The primary structure comprises 315 residues: Inosine-uridine preferring nucleoside hydrolase (315 aa).

Asp10 contacts Ca(2+). Asp14 serves as a coordination point for substrate. Asp15 and Thr126 together coordinate Ca(2+). Substrate contacts are provided by Asn160, Glu166, and Asn168. The Proton donor role is filled by His241. A Ca(2+)-binding site is contributed by Asp242.

As to quaternary structure, homotetramer. Requires Ca(2+) as cofactor.

The catalysed reaction is inosine + H2O = hypoxanthine + D-ribose. It catalyses the reaction uridine + H2O = D-ribose + uracil. It functions in the pathway purine metabolism; purine nucleoside salvage. Functionally, catalyzes the hydrolysis of the N-glycosidic bond of commonly occurring purine and pyrimidine nucleosides into ribose and the base, but has a preference for inosine and uridine as substrates. Is not active on thymidine and 2'-deoxynucleosides. Functions in purine salvage from the blood of the host, a fundamental pathway since protozoan parasites such as C.fasciculata are incapable of de novo purine biosynthesis. This Crithidia fasciculata protein is Inosine-uridine preferring nucleoside hydrolase (IUNH).